A 62-amino-acid polypeptide reads, in one-letter code: Snaclec aspercetin subunit alpha (62 aa).

An intrachain disulfide couples cysteine 2 to cysteine 13. One can recognise a C-type lectin domain in the interval 9 to 62 (YEGHCYRFFHPPKDWADAERFCTEQAKGGALVSIQRFGEEDFVSNLITKNLQRG).

Belongs to the snaclec family. In terms of assembly, heterodimer; disulfide-linked. As to expression, expressed by the venom gland.

It localises to the secreted. Snaclec that binds to von Willebrand factor (VWF) and induces its interaction with GPIbalpha (GP1BA) (via the vWF A1 domain), resulting in platelet aggregation. Intravenous injection in mice induces a dose-dependent drop in platelet count (thrombocytopenia). Pretreatment by intravenous injection by this protein in mice potentiates the hemorrhagic lesion in the skin provoked by the metalloproteinase BaP1 intradermally injected. This result is not observed when both BaP1 and this protein are injected simultaneously. This chain is Snaclec aspercetin subunit alpha, found in Bothrops asper (Terciopelo).